The chain runs to 391 residues: Probable sugar efflux transporter (391 aa).

A run of 12 helical transmembrane segments spans residues 16–36 (VFVF…PVAL), 51–71 (VGLM…PLML), 82–102 (LLFL…AWNF), 103–123 (WVLL…WSIT), 138–158 (QALG…LPLG), 171–191 (FGVI…LLPP), 210–230 (PLLM…FTTY), 247–267 (ITTL…FLFG), 277–297 (FIAF…VFKN), 300–320 (WVIF…TIAL), 338–358 (IFSG…SIVI), and 361–381 (LGLG…LFWL).

Belongs to the major facilitator superfamily. SotB (TC 2.A.1.2) family.

The protein resides in the cell inner membrane. Functionally, involved in the efflux of sugars. The physiological role may be the reduction of the intracellular concentration of toxic sugars or sugar metabolites. In Helicobacter pylori (strain G27), this protein is Probable sugar efflux transporter.